The following is a 140-amino-acid chain: Transcription antitermination protein NusB (140 aa).

It belongs to the NusB family.

Functionally, involved in transcription antitermination. Required for transcription of ribosomal RNA (rRNA) genes. Binds specifically to the boxA antiterminator sequence of the ribosomal RNA (rrn) operons. In Sorangium cellulosum (strain So ce56) (Polyangium cellulosum (strain So ce56)), this protein is Transcription antitermination protein NusB.